A 625-amino-acid chain; its full sequence is tRNA uridine 5-carboxymethylaminomethyl modification enzyme MnmG (625 aa).

FAD is bound at residue 14-19; sequence GAGHAG. An NAD(+)-binding site is contributed by 273 to 287; that stretch reads GPRYCPSIEDKIVRF.

This sequence belongs to the MnmG family. As to quaternary structure, homodimer. Heterotetramer of two MnmE and two MnmG subunits. The cofactor is FAD.

The protein localises to the cytoplasm. Its function is as follows. NAD-binding protein involved in the addition of a carboxymethylaminomethyl (cmnm) group at the wobble position (U34) of certain tRNAs, forming tRNA-cmnm(5)s(2)U34. This Clostridium botulinum (strain Hall / ATCC 3502 / NCTC 13319 / Type A) protein is tRNA uridine 5-carboxymethylaminomethyl modification enzyme MnmG.